The primary structure comprises 189 residues: Endoribonuclease YbeY (189 aa).

Residues 1 to 10 (MKERSSSPGT) show a composition bias toward polar residues. The disordered stretch occupies residues 1–23 (MKERSSSPGTPDSGRRARPKPAK). Zn(2+)-binding residues include H141, H145, and H151.

This sequence belongs to the endoribonuclease YbeY family. Zn(2+) serves as cofactor.

It is found in the cytoplasm. In terms of biological role, single strand-specific metallo-endoribonuclease involved in late-stage 70S ribosome quality control and in maturation of the 3' terminus of the 16S rRNA. The sequence is that of Endoribonuclease YbeY from Nitrosospira multiformis (strain ATCC 25196 / NCIMB 11849 / C 71).